The primary structure comprises 364 residues: Putative transport protein BUsg_115 (364 aa).

The next 9 helical transmembrane spans lie at 18–38 (IFII…ILGF), 40–60 (WASM…KFLG), 65–85 (VAVI…IVFL), 161–181 (GLFI…YWNG), 215–235 (ALGV…GLLI), 243–263 (LLMI…PILI), 280–300 (LLLI…PFFI), 309–329 (FLIL…GLFI), and 331–351 (PVVL…ISIA).

The protein belongs to the autoinducer-2 exporter (AI-2E) (TC 2.A.86) family.

It is found in the cell membrane. This chain is Putative transport protein BUsg_115, found in Buchnera aphidicola subsp. Schizaphis graminum (strain Sg).